The following is a 479-amino-acid chain: GTPase Obg (479 aa).

Residues 2–159 (PRFVDRVVIH…RDLTLELKTV (158 aa)) enclose the Obg domain. Residues 160-340 (ADVGLVGFPS…LIFGLWQMVS (181 aa)) form the OBG-type G domain. GTP-binding positions include 166–173 (GFPSAGKS), 191–195 (FTTLV), 212–215 (DVPG), 292–295 (NKID), and 321–323 (STV). The Mg(2+) site is built by Ser173 and Thr193. Residues 358–436 (PVPVDDSGFD…IGEMTFDWEP (79 aa)) form the OCT domain. Positions 438–479 (TPAGGHVAMSGRGTDVRLERSDRVGAAERKAARRQRRERDDD) are disordered. Residues 451–467 (TDVRLERSDRVGAAERK) show a composition bias toward basic and acidic residues.

This sequence belongs to the TRAFAC class OBG-HflX-like GTPase superfamily. OBG GTPase family. As to quaternary structure, monomer. It depends on Mg(2+) as a cofactor.

The protein resides in the cytoplasm. Its function is as follows. An essential GTPase which binds GTP, GDP and possibly (p)ppGpp with moderate affinity, with high nucleotide exchange rates and a fairly low GTP hydrolysis rate. Plays a role in control of the cell cycle, stress response, ribosome biogenesis and in those bacteria that undergo differentiation, in morphogenesis control. This chain is GTPase Obg, found in Mycobacterium ulcerans (strain Agy99).